Reading from the N-terminus, the 247-residue chain is MNPLLILAFLGAAVATPTDDDDKIVGGYTCEENSVPYQVSLNAGYHFCGGSLISDQWVVSAAHCYKSRIQVRLGEYNIDVLEGNEQFINSAKVIRHPNYNSWILDNDIMLIKLSSPAVLNARVATISLPRACAAPGTQCLISGWGNTLSSGTNYPELLQCLDAPILTQAQCEASYPGQITENMICAGFLEGGKDSCQGDSGGPVVCNGELQGIVSWGYGCAQKNKPGVYTKVCNFVDWIQSTIAANS.

A signal peptide spans 1–15 (MNPLLILAFLGAAVA). Residues 16-23 (TPTDDDDK) constitute a propeptide, activation peptide. The Peptidase S1 domain maps to 24-244 (IVGGYTCEEN…FVDWIQSTIA (221 aa)). Intrachain disulfides connect cysteine 30–cysteine 160, cysteine 48–cysteine 64, cysteine 132–cysteine 233, cysteine 139–cysteine 206, cysteine 171–cysteine 185, and cysteine 196–cysteine 220. Residue histidine 63 is the Charge relay system of the active site. The Ca(2+) site is built by glutamate 75, asparagine 77, valine 80, and glutamate 85. The active-site Charge relay system is the aspartate 107. Serine 200 (charge relay system) is an active-site residue.

Belongs to the peptidase S1 family. It depends on Ca(2+) as a cofactor.

It is found in the secreted. Its subcellular location is the extracellular space. The catalysed reaction is Preferential cleavage: Arg-|-Xaa, Lys-|-Xaa.. The chain is Anionic trypsin from Canis lupus familiaris (Dog).